The sequence spans 122 residues: Large ribosomal subunit protein uL14c (122 aa).

This sequence belongs to the universal ribosomal protein uL14 family. Part of the 50S ribosomal subunit.

It localises to the plastid. Its subcellular location is the chloroplast. Functionally, binds to 23S rRNA. In Panax ginseng (Korean ginseng), this protein is Large ribosomal subunit protein uL14c.